Reading from the N-terminus, the 397-residue chain is Phosphoglycerate kinase (397 aa).

Residues 21–23 (DFN), Arg-36, 59–62 (HCGR), Arg-118, and Arg-151 each bind substrate. ATP-binding positions include Lys-201, Glu-323, and 353–356 (GGDT).

The protein belongs to the phosphoglycerate kinase family. Monomer.

The protein localises to the cytoplasm. The enzyme catalyses (2R)-3-phosphoglycerate + ATP = (2R)-3-phospho-glyceroyl phosphate + ADP. Its pathway is carbohydrate degradation; glycolysis; pyruvate from D-glyceraldehyde 3-phosphate: step 2/5. The sequence is that of Phosphoglycerate kinase from Bartonella tribocorum (strain CIP 105476 / IBS 506).